Reading from the N-terminus, the 492-residue chain is N-succinylglutamate 5-semialdehyde dehydrogenase (492 aa).

220 to 225 is a binding site for NAD(+); it reads GSANTG. Residues E243 and C277 contribute to the active site.

The protein belongs to the aldehyde dehydrogenase family. AstD subfamily.

It carries out the reaction N-succinyl-L-glutamate 5-semialdehyde + NAD(+) + H2O = N-succinyl-L-glutamate + NADH + 2 H(+). Its pathway is amino-acid degradation; L-arginine degradation via AST pathway; L-glutamate and succinate from L-arginine: step 4/5. In terms of biological role, catalyzes the NAD-dependent reduction of succinylglutamate semialdehyde into succinylglutamate. The chain is N-succinylglutamate 5-semialdehyde dehydrogenase from Escherichia coli O9:H4 (strain HS).